A 100-amino-acid chain; its full sequence is Urease subunit gamma (100 aa).

The protein belongs to the urease gamma subunit family. As to quaternary structure, heterotrimer of UreA (gamma), UreB (beta) and UreC (alpha) subunits. Three heterotrimers associate to form the active enzyme.

It localises to the cytoplasm. The enzyme catalyses urea + 2 H2O + H(+) = hydrogencarbonate + 2 NH4(+). It functions in the pathway nitrogen metabolism; urea degradation; CO(2) and NH(3) from urea (urease route): step 1/1. In Mycobacteroides abscessus (strain ATCC 19977 / DSM 44196 / CCUG 20993 / CIP 104536 / JCM 13569 / NCTC 13031 / TMC 1543 / L948) (Mycobacterium abscessus), this protein is Urease subunit gamma.